The sequence spans 228 residues: 7-cyano-7-deazaguanine synthase (228 aa).

Residue 9–19 (LSGGPDSTTVL) participates in ATP binding. Cysteine 193, cysteine 203, cysteine 206, and cysteine 209 together coordinate Zn(2+).

Belongs to the QueC family. Zn(2+) is required as a cofactor.

It catalyses the reaction 7-carboxy-7-deazaguanine + NH4(+) + ATP = 7-cyano-7-deazaguanine + ADP + phosphate + H2O + H(+). The protein operates within purine metabolism; 7-cyano-7-deazaguanine biosynthesis. Its function is as follows. Catalyzes the ATP-dependent conversion of 7-carboxy-7-deazaguanine (CDG) to 7-cyano-7-deazaguanine (preQ(0)). This is 7-cyano-7-deazaguanine synthase from Rickettsia massiliae (strain Mtu5).